The following is a 4377-amino-acid chain: E3 ubiquitin-protein ligase HUWE1 (4377 aa).

Residues Ser648 and Ser649 each carry the phosphoserine modification. Disordered regions lie at residues 706-758 (KADG…VVGT), 978-1001 (DEKAGTTQGGKRSDGEQDGTAGSM), and 1018-1038 (TLAPMETDEPSSSDSKGKSKI). Acidic residues predominate over residues 725–735 (ASSEDEEEEEV). A compositionally biased stretch (polar residues) spans 737 to 756 (AMQSFNSAQQNETEPNQQVV). At Ser740 the chain carries Phosphoserine. A Phosphoserine modification is found at Ser1084. The segment covering 1291–1302 (LSKEKEGSRGEE) has biased composition (basic and acidic residues). A disordered region spans residues 1291–1320 (LSKEKEGSRGEEEAGQEEGGSRREPQVNQQ). Residues 1316 to 1355 (QVNQQQLQQLMDMGFTREHAMEALLNTSTMEQATEYLLTH) enclose the UBA domain. 4 positions are modified to phosphoserine: Ser1368, Ser1370, Ser1382, and Ser1395. A UIM domain is found at 1370–1389 (SEEDQMMRAIAMSLGQDIPM). The disordered stretch occupies residues 1396 to 1415 (PEEVACRKEEEERKAREKQE). Positions 1603–1680 (RAQMTKYLQS…ETGNRRPVML (78 aa)) constitute a WWE domain. Positions 1690-1733 (KNSKSSNGQELEKTLEESKETDIKHKENKGNDIPLALESTNTEK) are disordered. Positions 1699 to 1719 (ELEKTLEESKETDIKHKENKG) are enriched in basic and acidic residues. Position 1907 is a phosphoserine (Ser1907). 3 disordered regions span residues 2019–2065 (APAE…SKPL), 2262–2343 (SLFG…QEMQ), and 2355–2479 (LLER…ASPL). Positions 2022–2033 (ETSTTGTSQGEA) are enriched in polar residues. Position 2035 is a phosphothreonine (Thr2035). The span at 2037-2057 (EETREGKKDKEGDRTSEEGKQ) shows a compositional bias: basic and acidic residues. Composition is skewed to low complexity over residues 2262–2271 (SLFGSKSASS) and 2278–2291 (DAQGASQDSSSHQQ). Ser2266 carries the phosphoserine modification. At Lys2267 the chain carries N6-acetyllysine. 2 stretches are compositionally biased toward acidic residues: residues 2295–2306 (EPGEAEVQEEDH) and 2314–2325 (ADGDIMDGEAET). Ser2362, Ser2365, and Ser2391 each carry phosphoserine. The segment covering 2388-2398 (SNLSQASTLQA) has biased composition (polar residues). A compositionally biased stretch (acidic residues) spans 2408 to 2472 (DPEDEEEHTQ…SEMELDEDYP (65 aa)). Phosphoserine occurs at positions 2527, 2532, and 2535. Position 2554 is a phosphothreonine (Thr2554). Ser2584, Ser2595, and Ser2619 each carry phosphoserine. A compositionally biased stretch (basic and acidic residues) spans 2704 to 2716 (IIDKGKEDKENRD). Disordered regions lie at residues 2704 to 2970 (IIDK…GVDP), 2991 to 3012 (IRPPTRSAPSSNSSAPAVVGNP), and 3036 to 3059 (QQRAEQQRRELAQNASSDTPMDPV). Residues 2717–2736 (QSAQCTVTKTNDSTEQNVSD) are compositionally biased toward polar residues. Positions 2738–2756 (TPMPDSYPTTPSSTDAPTS) are enriched in low complexity. Thr2751 bears the Phosphothreonine mark. Composition is skewed to polar residues over residues 2818–2835 (AETTQMELSPAPTITSLS), 2847–2864 (AVSSQLEGSPMDTSSLAS), and 2877–2890 (AGSSEQPTAGSSTP). Residues Ser2826, Ser2833, Ser2835, Ser2861, Ser2887, and Ser2888 each carry the phosphoserine modification. Residue Thr2889 is modified to Phosphothreonine. Composition is skewed to low complexity over residues 2913–2932 (PPEDSSPPASSESSSTRDSA) and 2993–3007 (PPTRSAPSSNSSAPA). Ser2918 is subject to Phosphoserine. 5 positions are modified to phosphoserine: Ser3116, Ser3117, Ser3122, Ser3127, and Ser3135. An Omega-N-methylarginine modification is found at Arg3149. Disordered stretches follow at residues 3243–3266 (PKLSTSEERGKKSSKSCASSSHEN), 3352–3383 (TQQRTKETNCESDRERGSKQACSPCSSQSSSS), 3405–3429 (GKNSVKSVPVSSGGEGETSPHSLEA), 3471–3514 (SEVQ…TTPV), and 3539–3566 (TPTTATTTVSTSTTKGSKSPAKVGEGGS). Over residues 3355 to 3369 (RTKETNCESDRERGS) the composition is skewed to basic and acidic residues. Residues 3370 to 3383 (KQACSPCSSQSSSS) are compositionally biased toward low complexity. Composition is skewed to low complexity over residues 3475-3503 (TNSSNSGSSTAATSNTSTTTTTTTTATAP) and 3539-3552 (TPTTATTTVSTSTT). Ser3557, Ser3663, Ser3753, Ser3758, Ser3760, and Ser3761 each carry phosphoserine. The interval 3738-3759 (TRRANKKAKQTGRLGSSGLGSA) is disordered. Residues 3749–3759 (GRLGSSGLGSA) show a composition bias toward low complexity. 2 disordered regions span residues 3782-3850 (EGQR…LPLL) and 3897-3951 (RESK…SSSL). A compositionally biased stretch (polar residues) spans 3794-3803 (TSESSNQSET). Phosphoserine occurs at positions 3810, 3818, and 3830. Over residues 3817-3828 (PSPSAQDTQSIV) the composition is skewed to polar residues. Residue Thr3833 is modified to Phosphothreonine. Composition is skewed to basic and acidic residues over residues 3836–3845 (GEKEKEEKPP) and 3897–3918 (RESKPPVRDTRESQLAHIKDEP). Residues Ser3909 and Ser3922 each carry the phosphoserine modification. Positions 3919–3928 (PPLSPAPLTP) are enriched in pro residues. Thr3927 and Thr3930 each carry phosphothreonine. Over residues 3941 to 3951 (EPSSMHISSSL) the composition is skewed to polar residues. In terms of domain architecture, HECT spans 4041–4377 (SPEEMKNRLY…QECSEGFGLA (337 aa)). Position 4274 is a phosphotyrosine (Tyr4274). Catalysis depends on Cys4344, which acts as the Glycyl thioester intermediate.

This sequence belongs to the UPL family. TOM1/PTR1 subfamily. Interacts with isoform p19ARF of CDKN2A which strongly inhibits HUWE1 ubiquitin ligase activity. Interacts with MYCN, POLB and CDC6. Interacts with PA2G4. Interacts with NR1D1. Interacts with AMBRA1. Interacts with HAPSTR1. Interacts with HAPSTR2. In hepatocytes, interacts with PAQR3; the interaction promotes PPARA poylubiquitination and STUB1-mediated degradation. Phosphorylated on tyrosine; phosphorylation is probably required for its ability to inhibit TP53 transactivation. As to expression, widely expressed.

It is found in the cytoplasm. The protein localises to the nucleus. The protein resides in the mitochondrion. It catalyses the reaction S-ubiquitinyl-[E2 ubiquitin-conjugating enzyme]-L-cysteine + [acceptor protein]-L-lysine = [E2 ubiquitin-conjugating enzyme]-L-cysteine + N(6)-ubiquitinyl-[acceptor protein]-L-lysine.. It functions in the pathway protein modification; protein ubiquitination. Functionally, E3 ubiquitin-protein ligase which mediates ubiquitination and subsequent proteasomal degradation of target proteins. Regulates apoptosis by catalyzing the polyubiquitination and degradation of MCL1. Mediates monoubiquitination of DNA polymerase beta (POLB) at 'Lys-41', 'Lys-61' and 'Lys-81', thereby playing a role in base-excision repair. Also ubiquitinates the p53/TP53 tumor suppressor and core histones including H1, H2A, H2B, H3 and H4. Ubiquitinates MFN2 to negatively regulate mitochondrial fusion in response to decreased stearoylation of TFRC. Ubiquitination of MFN2 also takes place following induction of mitophagy; AMBRA1 acts as a cofactor for HUWE1-mediated ubiquitination. Regulates neural differentiation and proliferation by catalyzing the polyubiquitination and degradation of MYCN. May regulate abundance of CDC6 after DNA damage by polyubiquitinating and targeting CDC6 to degradation. Mediates polyubiquitination of PA2G4. Acts in concert with MYCBP2 to regulate the circadian clock gene expression by promoting the lithium-induced ubiquination and degradation of NR1D1. Binds to an upstream initiator-like sequence in the preprodynorphin gene. Mediates HAPSTR1 degradation, but is also a required cofactor in the pathway by which HAPSTR1 governs stress signaling. Acts as a regulator of the JNK and NF-kappa-B signaling pathways by mediating assembly of heterotypic 'Lys-63'-/'Lys-48'-linked branched ubiquitin chains that are then recognized by TAB2: HUWE1 mediates branching of 'Lys-48'-linked chains of substrates initially modified with 'Lys-63'-linked conjugates by TRAF6. 'Lys-63'-/'Lys-48'-linked branched ubiquitin chains protect 'Lys-63'-linkages from CYLD deubiquitination. Ubiquitinates PPARA in hepatocytes. This Mus musculus (Mouse) protein is E3 ubiquitin-protein ligase HUWE1 (Huwe1).